The following is a 414-amino-acid chain: Serine hydroxymethyltransferase (414 aa).

Residues Leu121 and 125 to 127 each bind (6S)-5,6,7,8-tetrahydrofolate; that span reads GHL. Lys229 is subject to N6-(pyridoxal phosphate)lysine.

Belongs to the SHMT family. In terms of assembly, homodimer. It depends on pyridoxal 5'-phosphate as a cofactor.

The protein resides in the cytoplasm. The catalysed reaction is (6R)-5,10-methylene-5,6,7,8-tetrahydrofolate + glycine + H2O = (6S)-5,6,7,8-tetrahydrofolate + L-serine. It participates in one-carbon metabolism; tetrahydrofolate interconversion. It functions in the pathway amino-acid biosynthesis; glycine biosynthesis; glycine from L-serine: step 1/1. In terms of biological role, catalyzes the reversible interconversion of serine and glycine with tetrahydrofolate (THF) serving as the one-carbon carrier. This reaction serves as the major source of one-carbon groups required for the biosynthesis of purines, thymidylate, methionine, and other important biomolecules. Also exhibits THF-independent aldolase activity toward beta-hydroxyamino acids, producing glycine and aldehydes, via a retro-aldol mechanism. This Polynucleobacter asymbioticus (strain DSM 18221 / CIP 109841 / QLW-P1DMWA-1) (Polynucleobacter necessarius subsp. asymbioticus) protein is Serine hydroxymethyltransferase.